The sequence spans 367 residues: 3-isopropylmalate dehydrogenase (367 aa).

77–90 contacts NAD(+); it reads GPKWDAVPYEVRPE. 4 residues coordinate substrate: Arg-97, Arg-107, Arg-135, and Asp-226. Residues Asp-226, Asp-250, and Asp-254 each contribute to the Mg(2+) site. NAD(+) is bound at residue 290 to 302; sequence GSAPDIAGKGIAN.

This sequence belongs to the isocitrate and isopropylmalate dehydrogenases family. LeuB type 1 subfamily. As to quaternary structure, homodimer. The cofactor is Mg(2+). Mn(2+) serves as cofactor.

The protein localises to the cytoplasm. The enzyme catalyses (2R,3S)-3-isopropylmalate + NAD(+) = 4-methyl-2-oxopentanoate + CO2 + NADH. The protein operates within amino-acid biosynthesis; L-leucine biosynthesis; L-leucine from 3-methyl-2-oxobutanoate: step 3/4. Functionally, catalyzes the oxidation of 3-carboxy-2-hydroxy-4-methylpentanoate (3-isopropylmalate) to 3-carboxy-4-methyl-2-oxopentanoate. The product decarboxylates to 4-methyl-2 oxopentanoate. The chain is 3-isopropylmalate dehydrogenase from Mesorhizobium japonicum (strain LMG 29417 / CECT 9101 / MAFF 303099) (Mesorhizobium loti (strain MAFF 303099)).